The sequence spans 360 residues: MVPRRLFVLAVVVLADTAAVVNSGFADSNPIRPVTDRAASALESTVFAALGRTRDALRFARFAVRYGKSYESAAEVHKRFRIFSESLQLVRSTNRKGLSYRLGINRFADMSWEEFRATRLGAAQNCSATLTGNHRMRAAAVALPETKDWREDGIVSPVKNQGHCGSCWTFSTTGALEAAYTQATGKPISLSEQQLVDCGFAFNNFGCNGGLPSQAFEYIKYNGGLDTEESYPYQGVNGICKFKNENVGVKVLDSVNITLGAEDELKDAVGLVRPVSVAFEVITGFRLYKSGVYTSDHCGTTPMDVNHAVLAVGYGVEDGVPYWLIKNSWGADWGDEGYFKMEMGKNMCGVATCASYPIVA.

An N-terminal signal peptide occupies residues 1-19 (MVPRRLFVLAVVVLADTAA). Positions 20–142 (VVNSGFADSN…NHRMRAAAVA (123 aa)) are cleaved as a propeptide — activation peptide. Asn-125 carries N-linked (GlcNAc...) asparagine glycosylation. 2 cysteine pairs are disulfide-bonded: Cys-164-Cys-207 and Cys-198-Cys-240. Cys-167 is an active-site residue. An N-linked (GlcNAc...) asparagine glycan is attached at Asn-256. An intrachain disulfide couples Cys-298 to Cys-348. Residues His-307 and Asn-327 contribute to the active site.

The protein belongs to the peptidase C1 family. Expressed at the onset of germination.

It localises to the vacuole. Functionally, involved in the degradation of the storage protein zein. May play a role in proteolysis during emergencies. This is Cysteine proteinase 2 (CCP2) from Zea mays (Maize).